Reading from the N-terminus, the 116-residue chain is Protein Wnt-5(III) (116 aa).

Ser-1 carries the O-palmitoleoyl serine; by PORCN lipid modification. Residue Asn-69 is glycosylated (N-linked (GlcNAc...) asparagine). Cys-82 and Cys-97 form a disulfide bridge.

Belongs to the Wnt family. Palmitoleoylation is required for efficient binding to frizzled receptors. Depalmitoleoylation leads to Wnt signaling pathway inhibition.

The protein resides in the secreted. The protein localises to the extracellular space. It localises to the extracellular matrix. Ligand for members of the frizzled family of seven transmembrane receptors. Probable developmental protein. May be a signaling molecule which affects the development of discrete regions of tissues. Is likely to signal over only few cell diameters. The polypeptide is Protein Wnt-5(III) (WNT-5(III)) (Eptatretus stoutii (Pacific hagfish)).